The sequence spans 371 residues: Lysine racemase (371 aa).

The Proton acceptor role is filled by lysine 39. Lysine 39 is modified (N6-(pyridoxal phosphate)lysine). Arginine 135 contributes to the substrate binding site. Residue tyrosine 266 is the Proton acceptor of the active site. Position 313 (methionine 313) interacts with substrate.

The protein belongs to the alanine racemase family. As to quaternary structure, homodimer. Pyridoxal 5'-phosphate is required as a cofactor.

The enzyme catalyses L-lysine = D-lysine. Catalyzes the interconversion of D-lysine and L-lysine. Can also use arginine and ornithine, but not alanine. The sequence is that of Lysine racemase from Oenococcus oeni (strain ATCC BAA-331 / PSU-1).